The sequence spans 364 residues: Endoglucanase A (364 aa).

Residue glutamate 169 is the Proton donor of the active site. Catalysis depends on glutamate 293, which acts as the Nucleophile.

This sequence belongs to the glycosyl hydrolase 5 (cellulase A) family.

The protein localises to the cytoplasm. It catalyses the reaction Endohydrolysis of (1-&gt;4)-beta-D-glucosidic linkages in cellulose, lichenin and cereal beta-D-glucans.. It carries out the reaction Endohydrolysis of (1-&gt;4)-beta-D-xylosidic linkages in xylans.. Functionally, hydrolyzes both carboxymethylcellulose and xylan. Probably has a role in hydrolyzing oligosaccharides derived from cellulose, which are transported across the cell wall. In Ruminococcus albus, this protein is Endoglucanase A (celA).